The primary structure comprises 144 residues: Peptidyl-Asp metalloendopeptidase (144 aa).

His64 contributes to the Zn(2+) binding site. Residue Glu65 is part of the active site. His68 provides a ligand contact to Zn(2+).

This sequence belongs to the peptidase M72 family. It depends on Zn(2+) as a cofactor.

It carries out the reaction Cleavage of Xaa-|-Asp, Xaa-|-Glu and Xaa-|-cysteic acid bonds.. In terms of biological role, metalloprotease, specifically cleaves on the N-terminal side of aspartyl, glutamyl and cysteic acid residues. This is Peptidyl-Asp metalloendopeptidase from Pseudomonas fragi.